The chain runs to 156 residues: Urease accessory protein UreE (156 aa).

The tract at residues 133–156 (RPESGAYGSGRTMGHDHGPFHVHA) is disordered. Over residues 145–156 (MGHDHGPFHVHA) the composition is skewed to basic and acidic residues.

It belongs to the UreE family.

It is found in the cytoplasm. Its function is as follows. Involved in urease metallocenter assembly. Binds nickel. Probably functions as a nickel donor during metallocenter assembly. The protein is Urease accessory protein UreE of Rhodobacter capsulatus (Rhodopseudomonas capsulata).